The primary structure comprises 481 residues: UDP-glycosyltransferase 73B3 (481 aa).

The active-site Proton acceptor is His-21. His-21 contributes to the an anthocyanidin binding site. The active-site Charge relay is the Asp-132. 7 residues coordinate UDP-alpha-D-glucose: Ala-355, Gln-357, His-372, Trp-375, Asn-376, Ser-377, and Glu-380. Ala-395 contributes to the an anthocyanidin binding site. Residues Glu-396 and Gln-397 each coordinate UDP-alpha-D-glucose.

The protein belongs to the UDP-glycosyltransferase family. As to expression, expressed in roots and flowers.

The enzyme catalyses a flavonol + UDP-alpha-D-glucose = a flavonol 3-O-beta-D-glucoside + UDP + H(+). Possesses quercetin 3-O-glucosyltransferase activity in vitro. Also active in vitro on benzoates and benzoate derivatives. Involved in stress or defense responses. The sequence is that of UDP-glycosyltransferase 73B3 (UGT73B3) from Arabidopsis thaliana (Mouse-ear cress).